Reading from the N-terminus, the 101-residue chain is Cell division protein FtsB (101 aa).

Residues 1–3 (MRI) lie on the Cytoplasmic side of the membrane. Residues 4–21 (VIYSMLVLLIAIQYPLWL) traverse the membrane as a helical segment. The Periplasmic segment spans residues 22–101 (GKGGWLKVYE…KSSDTQVTKQ (80 aa)). Residues 33 to 53 (ERQVELQEAKNSLLALRNAKL) are a coiled coil.

This sequence belongs to the FtsB family. Part of a complex composed of FtsB, FtsL and FtsQ.

It is found in the cell inner membrane. Essential cell division protein. May link together the upstream cell division proteins, which are predominantly cytoplasmic, with the downstream cell division proteins, which are predominantly periplasmic. The sequence is that of Cell division protein FtsB from Polynucleobacter necessarius subsp. necessarius (strain STIR1).